Here is a 306-residue protein sequence, read N- to C-terminus: MARAAELSDVMSVQALHDEARAKVNLTLRVLGRRVDGYHELESVVAFADCADRLTLQAGSELSLTATGPRVQECGDNADNLVIKAARLLGERVADLRTGSFALDKQLPIAAGIGGGSADAAAALRLLARANDLALDDPRLIDAARKTGADVPVCLASKSCIMTGIGETLLPLALPRLPVVMVNPRVAVATKDVFAALGLRSGQLRVGVTDVVTAPKWPDQAAPLDAWIAVLAAGINDLEAPAKKLQPVIGEVLKLLGKARGARLARMSGSGATCFAIFADAAAAEAAAQSVSAAHPDWWVHAGTLG.

Lys-23 is a catalytic residue. An ATP-binding site is contributed by 108 to 118 (PIAAGIGGGSA). Residue Asp-150 is part of the active site.

Belongs to the GHMP kinase family. IspE subfamily.

The catalysed reaction is 4-CDP-2-C-methyl-D-erythritol + ATP = 4-CDP-2-C-methyl-D-erythritol 2-phosphate + ADP + H(+). The protein operates within isoprenoid biosynthesis; isopentenyl diphosphate biosynthesis via DXP pathway; isopentenyl diphosphate from 1-deoxy-D-xylulose 5-phosphate: step 3/6. Catalyzes the phosphorylation of the position 2 hydroxy group of 4-diphosphocytidyl-2C-methyl-D-erythritol. This chain is 4-diphosphocytidyl-2-C-methyl-D-erythritol kinase, found in Rhodopseudomonas palustris (strain BisB18).